A 455-amino-acid chain; its full sequence is Chromosomal replication initiator protein DnaA (455 aa).

The tract at residues 1–77 (MASLNENQKF…GFEVFGRMID (77 aa)) is domain I, interacts with DnaA modulators. Residues 77–116 (DYELYANDELTELELHRLNNQSSIEEQPRSTAKPASPLVS) are domain II. The tract at residues 117-333 (GLNEKYNFEN…GALNRVEFVA (217 aa)) is domain III, AAA+ region. Gly-161, Gly-163, Lys-164, and Thr-165 together coordinate ATP. The interval 334–455 (RANGIAVVDI…KDIDSIKRKF (122 aa)) is domain IV, binds dsDNA.

It belongs to the DnaA family. Oligomerizes as a right-handed, spiral filament on DNA at oriC.

The protein localises to the cytoplasm. Plays an essential role in the initiation and regulation of chromosomal replication. ATP-DnaA binds to the origin of replication (oriC) to initiate formation of the DNA replication initiation complex once per cell cycle. Binds the DnaA box (a 9 base pair repeat at the origin) and separates the double-stranded (ds)DNA. Forms a right-handed helical filament on oriC DNA; dsDNA binds to the exterior of the filament while single-stranded (ss)DNA is stabiized in the filament's interior. The ATP-DnaA-oriC complex binds and stabilizes one strand of the AT-rich DNA unwinding element (DUE), permitting loading of DNA polymerase. After initiation quickly degrades to an ADP-DnaA complex that is not apt for DNA replication. Binds acidic phospholipids. The polypeptide is Chromosomal replication initiator protein DnaA (Lactococcus lactis subsp. lactis (strain IL1403) (Streptococcus lactis)).